The following is a 2800-amino-acid chain: MEVIKKEKKDKEKKDKEEKKDKEKKDKSEKKEKKDKEKKEKEKKEKKEKEKEKEKDKEKDGGLFSIVGGWVGNLTEPTPPPPPPPSSVSAQSTAEANAILLNPTTQENHKKAMDFWVTNTSTTTTTTTTTSSNNIPSLVSVQNNNTSNNNINNNNKTSNTTGSNVSSSNNKETVKINVTSLDSGGNNNASGKDISNEHSPKNRKEKEKEKDKDNKEDSINESPVDENRRKLVEGFMKSLQGCSDAIKVILDVFYQPLKKADLLSQEELKAIFSLIESISSFQQTILIDFKKYISNWNSTTQAQLHSTFLQFVGYLKLYKVYGLQYNYSLSSLCLLMFDNQRFESFINNAESKLVNEHKYSLAPLVPTSSSSSCVKPVSLSEILGSQYDQTTSQSTNNSSGSSFPAVTLRRTGHTFTGINSANSNNNNNNSGGGSSGINNSNSVTGKFTQEYTYSNLASLLILPIHFLARFHQFFKSLIDSIAVLNPDYKPYNNLYKQIVQVVKDIVNESVNINKVISISKSIKSPTIGLFNSSDIVQNRKFLKEGILIEQFNNQRISYYTFLFSDIILFTEKIEDTSTINNNTMMAYDGSFYLLKKLERIVNIQVDDPELGFEYRKGFQIKTKESSIFYMTSSEKEKSTWFQVLSQASLKSNQNQNQNQNNLTNSYSSTVAGGRNSTIGLGGIDDFNNNNNGNNNGSNNDDGPDEFEDAKDIALFCKMIISGQRPKVELTSQMLKISDPKPLFAALASTHFVNQLIFIPLTMNDKYMQMTLGMMSLNKSITHLTLSQNSINDPCAVALGDMLRYNHSLIQMDLSENTIADKGLISLIDGILSHPSITVVILTQNQITDTGAKHISKLLKFNQTLNALFLEDNNITQSMGAEIIDQWVSCHSTVLSRITLPSIPPEYSDRIKLKAISVTNRLDKKKKQLQVNQKSTTPSTSTSTTSSTIINNNKGLLDLGSCDYSEISLQLLNKLNMLSLDSRRISDLKELYLDHNCISSIPVSILKELKNLQILDLSNNQLSSLPSEISEMKELKLLNVSHNNLSSLPIELGTLCKLNHLDISFNFIETINVNSLSQLVNLKVLMMQRNYFNRLPIEIFTRLKSLESFSIAGSPCFHPIKQRIYEAIAIKATKLDLSDCGLSALPIEIGSISSLIELDLTNNRIKDLPPQIGKLSSLQTLNLSNNAIESLPWQLSQLTTLKVLNITGNPISFDGASNAKISIPDVLSGDDLIGILKYLKLASTKEKPCMRMKLMLVGQENVGKTSIAKCLKKEIIPVGKKLRQTIGLGTKKSKTPTLTEANGSIDFNAPQSINPLNTSLNISTDGINMDDWRPPSEDQSPPVTFSIWDFAGQEVYYSTHQFFISSRSVFIVVFDMSVYNPDETSRVPYWLQCIEAFGGNSPVILVGTHLDDLPNGVDVNQITQDIHSKYFTKFPNVKFFLPVSCKSGKNINKLQNHIVKLGKAEKKLGDLFSRSYFQLENLILSEREMNTPPIITLSEFTEMAISCGIPQTSITAAADFLKELGVIVYFDDPKSGLDQFIFIDPPWLTRLMATIITSKPNFVQSGVLDQSNLHQIWKPPDFPQHLHHVLLAILQKFEIVHPLPDPKATISSSSSSPSTTQKSLNNSGSNLKSSGSAISTSSSSTTNGNKTLHRTNSTTNTTSLLNVSRFGNGSISKGSSLSIIKKINDQSTSPSNSTTPSPNTSSNNFSDSITLVPKSSTKHLVPILLSEERPNSIEKLYDQILLKSQQQQPFLERIYQFEFLPIGFFSKLMIRTMHFTTVKEFWKNGLLVEKDDSQCLIESIQQFNQINFKAWGKNPASLLRFIIETAEVLISGWYKLHFHFLVPCNCINCNSILISNIGSINIINSTINLSSNNNNNVNIVNMSQQQHHQQQQSPSTSTSSSSSLTSSQPSLSTPLTSSQPSLSTSQPQLSTTTTTTATTTTSSSSQSLASQQSSSQIQLTHSSSLSSMSGSISTNSLNSNVSSSSSTPSLLSPPLLNPDSTSSSNETSGDILDLDFADYYDGESVSPGGTLKGKRKKNPSKFLTLYRNTNKPKINGTTGSGSSSSIVTTAVSSSSSSSSSTSLSNTSSRQLDLSKISHLINQQLSFGPSKTQDLRTMFLYEEIERIFLSKKFEVVCRSSITGEETIVRLDSLVPELMMSDIGPNFTLEYKDLEIIEKVGEGGFGIVYKGKLRGQLVAIKQITIDSGQAEAASEIYREFRREVWLSNTLTHPSIVSLKGYCLDPCCIVMEYIPNGTLYSHLRKSFSSITWQLKLKIAINIADAIKHMHGFTPKICHRDLKSPNILMLSDMNAAVVCKVSDFGETRAVVTSALGRDKLSNPIWLSPEIMRGDEYTEKADVYSFGIVLWEILTGLLPFDEYPVAHSSFMYQLEDEITNGLRPTIPQNSVCGHPDFITLITDCWQNDPLKRPTFIDIHSRLLIMSGLNPATATTTNSAKSTISTGFNSNSGATTTTKPKSSTISSGSGTTSPPQPHPQLVRKLTQNFTPIATSPTPSVIVSSVPTTTTTTTTSVATTPTVQTILAGGNITPKPSVPTAMKPNITPKPTLISSQKPPAPNPVPILKTPTPTNLSPTSISTPTTPTTPTTPTTPTTPTNSTSSNLKPTPTSKSNPSSPPQIATTATATQTPTPSPISVLKPPRSLPQKPVGTTQTTSTPPTNQTPNPTIVTRPPLPSSLSSNSINKPPSKPLPTPGGVTSPPPPPTTSSTTPIKFNSISAGNKTIGQSSTLPSSTLKQFTANNNTSPSGSSSLPNSTVSSPSSSFLLRPTGGTISKKLPAIPK.

Residues 1 to 61 (MEVIKKEKKD…EKEKDKEKDG (61 aa)) are compositionally biased toward basic and acidic residues. Disordered stretches follow at residues 1-92 (MEVI…SAQS), 123-225 (TTTT…SPVD), and 417-437 (GINSANSNNNNNNSGGGSSGI). The segment covering 77–86 (PTPPPPPPPS) has biased composition (pro residues). Composition is skewed to low complexity over residues 123-134 (TTTTTTTTSSNN) and 143-170 (NNNTSNNNINNNNKTSNTTGSNVSSSNN). A compositionally biased stretch (polar residues) spans 176–190 (INVTSLDSGGNNNAS). Residues 194 to 218 (ISNEHSPKNRKEKEKEKDKDNKEDS) are compositionally biased toward basic and acidic residues. The DH domain occupies 227–508 (NRRKLVEGFM…VQVVKDIVNE (282 aa)). Positions 417–429 (GINSANSNNNNNN) are enriched in low complexity. Positions 540–649 (KFLKEGILIE…WFQVLSQASL (110 aa)) constitute a PH domain. LRR repeat units lie at residues 777-800 (NKSITHLTLSQNSINDPCAVALGD), 805-832 (NHSLIQMDLSENTIADKGLISLIDGILS), 834-856 (PSITVVILTQNQITDTGAKHISK), and 861-885 (NQTLNALFLEDNNITQSMGAEIIDQ). The disordered stretch occupies residues 926–946 (KQLQVNQKSTTPSTSTSTTSS). The span at 934–946 (STTPSTSTSTTSS) shows a compositional bias: low complexity. 10 LRR repeats span residues 971–984 (LNKLNMLSLDSRRI), 985–1007 (SDLKELYLDHNCISSIPVSILKE), 1008–1031 (LKNLQILDLSNNQLSSLPSEISEM), 1033–1056 (ELKLLNVSHNNLSSLPIELGTLCK), 1058–1077 (NHLDISFNFIETINVNSLSQ), 1078–1101 (LVNLKVLMMQRNYFNRLPIEIFTR), 1128–1151 (AIKATKLDLSDCGLSALPIEIGSI), 1152–1174 (SSLIELDLTNNRIKDLPPQIGKL), 1175–1197 (SSLQTLNLSNNAIESLPWQLSQL), and 1199–1222 (TLKVLNITGNPISFDGASNAKISI). The 221-residue stretch at 1244 to 1464 (KEKPCMRMKL…NHIVKLGKAE (221 aa)) folds into the Roc domain. Residues 1257 to 1264 (GQENVGKT), 1348 to 1352 (DFAGQ), and 1407 to 1410 (THLD) contribute to the GTP site. One can recognise a COR 1 domain in the interval 1473–1604 (RSYFQLENLI…KFEIVHPLPD (132 aa)). 2 disordered regions span residues 1605-1665 (PKAT…SLLN) and 1688-1711 (DQSTSPSNSTTPSPNTSSNNFSDS). Low complexity-rich tracts occupy residues 1610–1645 (SSSSSSPSTTQKSLNNSGSNLKSSGSAISTSSSSTT), 1653–1665 (RTNSTTNTTSLLN), and 1688–1707 (DQSTSPSNSTTPSPNTSSNN). In terms of domain architecture, COR 2 spans 1717–1790 (KSSTKHLVPI…VKEFWKNGLL (74 aa)). Residues 1886-2008 (SQQQHHQQQQ…LNPDSTSSSN (123 aa)) are compositionally biased toward low complexity. 2 disordered regions span residues 1886 to 2011 (SQQQ…NETS) and 2050 to 2070 (RNTNKPKINGTTGSGSSSSIV). The segment covering 2050 to 2059 (RNTNKPKING) has biased composition (polar residues). Positions 2175-2440 (LEIIEKVGEG…PTFIDIHSRL (266 aa)) constitute a Protein kinase domain. ATP is bound by residues 2181-2189 (VGEGGFGIV) and K2202. The Proton acceptor role is filled by D2300. Low complexity-rich tracts occupy residues 2452–2490 (TTTNSAKSTISTGFNSNSGATTTTKPKSSTISSGSGTTS), 2583–2654 (LKTP…SPIS), 2669–2685 (TTQTTSTPPTNQTPNPT), and 2694–2704 (SSLSSNSINKP). Disordered regions lie at residues 2452–2498 (TTTN…HPQL) and 2544–2800 (AGGN…AIPK). The span at 2705–2723 (PSKPLPTPGGVTSPPPPPT) shows a compositional bias: pro residues. The segment covering 2730 to 2756 (IKFNSISAGNKTIGQSSTLPSSTLKQF) has biased composition (polar residues). Positions 2757–2787 (TANNNTSPSGSSSLPNSTVSSPSSSFLLRPT) are enriched in low complexity.

Belongs to the protein kinase superfamily. TKL Ser/Thr protein kinase family. ROCO subfamily.

The catalysed reaction is L-seryl-[protein] + ATP = O-phospho-L-seryl-[protein] + ADP + H(+). It catalyses the reaction L-threonyl-[protein] + ATP = O-phospho-L-threonyl-[protein] + ADP + H(+). Its function is as follows. May act as a serine/threonine-protein kinase and guanine-nucleotide releasing factor. The protein is Probable serine/threonine-protein kinase roco5 (roco5) of Dictyostelium discoideum (Social amoeba).